A 46-amino-acid polypeptide reads, in one-letter code: Photosystem II reaction center protein K (46 aa).

A propeptide spanning residues 1-9 (MLTLLNTFA) is cleaved from the precursor. A helical membrane pass occupies residues 25-45 (LPLIPLFFFLLVFVWQAAVGF).

It belongs to the PsbK family. PSII is composed of 1 copy each of membrane proteins PsbA, PsbB, PsbC, PsbD, PsbE, PsbF, PsbH, PsbI, PsbJ, PsbK, PsbL, PsbM, PsbT, PsbX, PsbY, Psb30/Ycf12, peripheral proteins PsbO, CyanoQ (PsbQ), PsbU, PsbV and a large number of cofactors. It forms dimeric complexes.

It is found in the cellular thylakoid membrane. Functionally, one of the components of the core complex of photosystem II (PSII). PSII is a light-driven water:plastoquinone oxidoreductase that uses light energy to abstract electrons from H(2)O, generating O(2) and a proton gradient subsequently used for ATP formation. It consists of a core antenna complex that captures photons, and an electron transfer chain that converts photonic excitation into a charge separation. The polypeptide is Photosystem II reaction center protein K (Prochlorococcus marinus (strain MIT 9515)).